We begin with the raw amino-acid sequence, 260 residues long: uncharacterized protein (260 aa).

The HTH iclR-type domain occupies 7-67; that stretch reads VPALTRAIDI…DHQENFCLWT (61 aa). Positions 28–47 form a DNA-binding region, H-T-H motif; that stretch reads AATIIDTLGIPKSTAYLLLN. Residues 82–251 form the IclR-ED domain; the sequence is LRELARPRLT…ARDISRLLGW (170 aa).

This is an uncharacterized protein from Escherichia coli (strain K12).